Here is a 336-residue protein sequence, read N- to C-terminus: Polyadenylate-binding protein-interacting protein 12 (336 aa).

Residues 14 to 47 are disordered; the sequence is EAGGLISPSPPSSVTSQESGASSNNDHGGNGIHD. Residues 25 to 40 are compositionally biased toward polar residues; it reads SSVTSQESGASSNNDH. Positions 75-85 match the PAM2-like motif; it reads KLNPMAKEFIP. The short motif at 122-134 is the Bipartite nuclear localization signal element; sequence RRKKSFGQQGKRR. RRM domains lie at 150–225 and 247–323; these read RTVY…PSKT and RTIY…PSKT.

Interacts with MPC. Expressed in roots, leaves, stems, flowers and siliques. Detected in flowers only in growing organs: gynoecium, petals, stamenal filaments, anther walls and ovules.

The protein localises to the nucleus. Its function is as follows. Binds nucleotic acids in vitro. The sequence is that of Polyadenylate-binding protein-interacting protein 12 (CID12) from Arabidopsis thaliana (Mouse-ear cress).